Consider the following 289-residue polypeptide: Shikimate dehydrogenase (NADP(+)) (289 aa).

Residues 22–24 (SRS) and Thr69 each bind shikimate. Catalysis depends on Lys73, which acts as the Proton acceptor. Glu85 contacts NADP(+). Shikimate contacts are provided by Asn94 and Asp109. Residues 134–138 (GAGGA), 158–163 (NRTLSR), and Ile226 each bind NADP(+). Position 228 (Tyr228) interacts with shikimate. Gly249 serves as a coordination point for NADP(+).

It belongs to the shikimate dehydrogenase family. In terms of assembly, homodimer.

The enzyme catalyses shikimate + NADP(+) = 3-dehydroshikimate + NADPH + H(+). Its pathway is metabolic intermediate biosynthesis; chorismate biosynthesis; chorismate from D-erythrose 4-phosphate and phosphoenolpyruvate: step 4/7. In terms of biological role, involved in the biosynthesis of the chorismate, which leads to the biosynthesis of aromatic amino acids. Catalyzes the reversible NADPH linked reduction of 3-dehydroshikimate (DHSA) to yield shikimate (SA). The polypeptide is Shikimate dehydrogenase (NADP(+)) (Brucella abortus (strain S19)).